The following is a 448-amino-acid chain: Probable xyloglucan 6-xylosyltransferase 1 (448 aa).

Residues 1–19 (MWVAERVVGERRMREIQRF) are Cytoplasmic-facing. The helical; Signal-anchor for type II membrane protein transmembrane segment at 20-42 (ARNAKLTVVCLLLTVVVLRGTVG) threads the bilayer. Residues 43–448 (AGKFGTPQQD…AFKAMKTTST (406 aa)) are Lumenal-facing. The interval 71 to 113 (HHDALSRGGGSSSSSGRAAQRDDEPDPPPRTLRDPPYTLGPKI) is disordered. Residue asparagine 421 is glycosylated (N-linked (GlcNAc...) asparagine).

The protein belongs to the glycosyltransferase 34 family.

The protein localises to the golgi apparatus membrane. It carries out the reaction Transfers an alpha-D-xylosyl residue from UDP-D-xylose to a glucose residue in xyloglucan, forming an alpha-(1-&gt;6)-D-xylosyl-D-glucose linkage.. Functionally, probable xyloglucan xylosyltransferase involved in the biosynthesis of xyloglucan in roots. This Oryza sativa subsp. indica (Rice) protein is Probable xyloglucan 6-xylosyltransferase 1.